Reading from the N-terminus, the 758-residue chain is Relaxin receptor 1 (758 aa).

Over 1–409 (MTSGPFFFCI…ENLLASIIQR (409 aa)) the chain is Extracellular. In terms of domain architecture, LDL-receptor class A spans 26–63 (SCPLGSFPCGNMSRCLPQLLHCNGVDDCGNRADEDHCG). Cystine bridges form between C27/C40, C34/C53, and C47/C62. N-linked (GlcNAc...) asparagine glycosylation is present at N36. The Ca(2+) site is built by L45, N48, V50, D52, D58, and E59. N-linked (GlcNAc...) asparagine glycosylation is present at N127. LRR repeat units follow at residues 127–148 (NVTV…GFRK), 151–172 (ELQK…AFRG), 175–196 (SLTK…VFED), 199–220 (RLEW…TFYG), 223–244 (SLIL…PLCQ), 248–269 (RLHW…TFIS), 272–293 (NLTV…AFTH), 296–317 (KLDE…IFKD), 320–341 (ELSQ…QFDC), and 344–365 (KLKS…MFRP). Residues N264 and N272 are each glycosylated (N-linked (GlcNAc...) asparagine). The N-linked (GlcNAc...) asparagine glycan is linked to N325. Residue N368 is glycosylated (N-linked (GlcNAc...) asparagine). The chain crosses the membrane as a helical span at residues 410 to 430 (VFVWVVSAITCFGNIFVICMR). At 431–443 (PYIRSENKLHAMS) the chain is on the cytoplasmic side. Residues 444–464 (IISLCCADCLMGVYLFVIGAF) traverse the membrane as a helical segment. The Extracellular portion of the chain corresponds to 465-486 (DLKFRGEYNKHAQPWMESVHCQ). A disulfide bond links C485 and C563. A helical membrane pass occupies residues 487-507 (FMGSLAILSTEVSVLLLTFLT). Residues 508–527 (LEKYICIVYPFRCLRPRKCR) are Cytoplasmic-facing. The helical transmembrane segment at 528-548 (TITVLIFIWIIGFIVAFAPLG) threads the bilayer. The Extracellular segment spans residues 549–577 (NKEFFKNYYGTNGVCFPLHSEDTGSTGAQ). Residues 578-598 (IYSVVIFLGINLVAFIIIVFS) form a helical membrane-spanning segment. Residues 599–629 (YGSMFYSVHQSSVTVTEIQKQVKKEVVLAKR) are Cytoplasmic-facing. A helical transmembrane segment spans residues 630–650 (FFFIVFTDALCWIPIFILKFL). Position 651 (S651) is a topological domain, extracellular. A helical transmembrane segment spans residues 652–672 (LLQVEIPDSITSWVVIFILPI). The Cytoplasmic segment spans residues 673-758 (NSALNPIIYT…SQSSRLNSYS (86 aa)).

Belongs to the G-protein coupled receptor 1 family. As to quaternary structure, interacts with C1QTNF8.

The protein resides in the cell membrane. Its function is as follows. Receptor for relaxins. The activity of this receptor is mediated by G proteins leading to stimulation of adenylate cyclase and an increase of cAMP. Binding of the ligand may also activate a tyrosine kinase pathway that inhibits the activity of a phosphodiesterase that degrades cAMP. The sequence is that of Relaxin receptor 1 (Rxfp1) from Mus musculus (Mouse).